The primary structure comprises 430 residues: Divergent protein kinase domain 2A (430 aa).

A signal peptide spans 1–35 (MWRLVPLKLGRLSRALKLAALGSLLVLMLLHSPSL).

This sequence belongs to the DIPK family. As to expression, expressed in heart, brain, liver, spleen, kidney, lung, thymus, testis, ovary and muscle.

It is found in the golgi apparatus. Its subcellular location is the cytoplasmic vesicle. It localises to the COPI-coated vesicle. The protein localises to the secreted. Its function is as follows. May play a role in cardiomyocyte proliferation through paracrine signaling and activation of the PI3-kinase signaling cascade. The chain is Divergent protein kinase domain 2A (Dipk2a) from Mus musculus (Mouse).